The following is a 617-amino-acid chain: Zinc finger protein 613 (617 aa).

The KRAB domain maps to 8 to 78 (LTLEDVAVEF…ENEIHSQICP (71 aa)). 12 consecutive C2H2-type zinc fingers follow at residues 204-226 (HVCT…QRVH), 232-254 (HGCS…QRNH), 260-282 (YECT…QKIH), 288-310 (YICS…QRVH), 316-338 (HGCS…QRTH), 344-366 (YECT…QKAH), 372-394 (YICR…QRIH), 400-422 (YICN…RRTH), 428-450 (YVCN…QRFH), 456-478 (FVCT…QRIH), 484-506 (YTCS…RRTH), and 512-535 (YGCS…GMLH).

Belongs to the krueppel C2H2-type zinc-finger protein family.

Its subcellular location is the nucleus. Functionally, may be involved in transcriptional regulation. The protein is Zinc finger protein 613 (ZNF613) of Homo sapiens (Human).